We begin with the raw amino-acid sequence, 583 residues long: GTP diphosphokinase CRSH1, chloroplastic (583 aa).

Low complexity predominate over residues 1–13 (MATAATTSAAAIP). Residues 1–68 (MATAATTSAA…SSSSSTPAEG (68 aa)) form a disordered region. The transit peptide at 1–69 (MATAATTSAA…SSSSTPAEGG (69 aa)) directs the protein to the chloroplast. Over residues 19–39 (RRQHPHPRRPGLRPRRLHRLR) the composition is skewed to basic residues. Positions 40 to 66 (LPAQAAAAAAASSPSTSSSSSSSSTPA) are enriched in low complexity. In terms of domain architecture, HD spans 119–219 (ALARALAIAA…LELALKLDMM (101 aa)). EF-hand domains are found at residues 473–508 (GDSN…LGAG) and 510–542 (KDAK…IELM). Aspartate 486, asparagine 488, aspartate 490, arginine 492, glutamate 497, aspartate 520, asparagine 522, aspartate 524, serine 526, and glutamate 531 together coordinate Ca(2+).

Belongs to the RelA/SpoT family. Expressed in roots and shoots.

Its subcellular location is the plastid. The protein resides in the chloroplast. The enzyme catalyses GTP + ATP = guanosine 3'-diphosphate 5'-triphosphate + AMP. Activated by calcium. Its function is as follows. Possesses calcium-dependent ppGpp (guanosine 3'-diphosphate 5'-diphosphate) synthetase activity in vitro and is able to functionally complement E.coli relA mutants. May be involved in a rapid plant ppGpp-mediated response to pathogens and other stresses. The chain is GTP diphosphokinase CRSH1, chloroplastic from Oryza sativa subsp. japonica (Rice).